We begin with the raw amino-acid sequence, 533 residues long: Beta-apo-4'-carotenal oxygenase (533 aa).

Residues Glu-226 and Cys-260 contribute to the active site.

It belongs to the aldehyde dehydrogenase family.

The catalysed reaction is 4'-apo-beta-carotenal + NAD(+) + H2O = neurosporaxanthin + NADH + 2 H(+). Functionally, beta-apo-4'-carotenal oxygenase involved in the last step of synthesis of neurosporaxanthin, a carboxylic apocarotenoid acting as an essential protective pigment and leading to orange pigmentation. Converts the aldehyde beta-apo-4'-carotenal into neurosporaxanthin. Neurosporaxanthin is synthesized from geranyl-geranyl pyrophosphate (GGPP) through several enzymatic activities. Phytoene synthase activity performed by the bifunctional enzyme al-2 first produces phytoene from geranyl-geranyl pyrophosphate (GGPP). The phytoene dehydrogenase al-1 then introduces 5 desaturations to lead to 3,4-didehydrolycopene via the intermediates phytofluene, zeta-carotene, neurosporene and lycopene. Al-2 cyclase activity then converts 3,4-didehydrolycopene into torulene. Al-2 can also convet lycopene into gamma-carotene which in turn is converted to beta-carotene by an additional al-2 cyclization reaction. Torulene is the substrate of the dioxidase cao-2 that breaks the molecule, removing five carbon atoms to yield beta-apo-4'-carotenal, whereas the aldehyde dehydrogenase ylo-1 mediates the last step by converting beta-apo-4'-carotenal into neurosporaxanthin. This Neurospora crassa (strain ATCC 24698 / 74-OR23-1A / CBS 708.71 / DSM 1257 / FGSC 987) protein is Beta-apo-4'-carotenal oxygenase.